The sequence spans 142 residues: 3-hydroxyacyl-[acyl-carrier-protein] dehydratase FabZ (142 aa).

The active site involves His-50.

This sequence belongs to the thioester dehydratase family. FabZ subfamily.

The protein resides in the cytoplasm. The catalysed reaction is a (3R)-hydroxyacyl-[ACP] = a (2E)-enoyl-[ACP] + H2O. Functionally, involved in unsaturated fatty acids biosynthesis. Catalyzes the dehydration of short chain beta-hydroxyacyl-ACPs and long chain saturated and unsaturated beta-hydroxyacyl-ACPs. In Clostridium tetani (strain Massachusetts / E88), this protein is 3-hydroxyacyl-[acyl-carrier-protein] dehydratase FabZ.